Reading from the N-terminus, the 169-residue chain is Phosphopantetheine adenylyltransferase (169 aa).

S10 is a substrate binding site. ATP-binding positions include 10 to 11 (SF) and H18. Substrate is bound by residues K42, T79, and R93. Residues 94–96 (GLR), E104, and 129–135 (VRPITAT) each bind ATP.

This sequence belongs to the bacterial CoaD family. In terms of assembly, homohexamer. Requires Mg(2+) as cofactor.

It is found in the cytoplasm. It carries out the reaction (R)-4'-phosphopantetheine + ATP + H(+) = 3'-dephospho-CoA + diphosphate. Its pathway is cofactor biosynthesis; coenzyme A biosynthesis; CoA from (R)-pantothenate: step 4/5. Reversibly transfers an adenylyl group from ATP to 4'-phosphopantetheine, yielding dephospho-CoA (dPCoA) and pyrophosphate. The protein is Phosphopantetheine adenylyltransferase of Rhodopseudomonas palustris (strain ATCC BAA-98 / CGA009).